Reading from the N-terminus, the 356-residue chain is Phosphoserine aminotransferase (356 aa).

R41 serves as a coordination point for L-glutamate. Pyridoxal 5'-phosphate contacts are provided by residues A76–S77, W102, T150, D169, and Q192. At K193 the chain carries N6-(pyridoxal phosphate)lysine. A pyridoxal 5'-phosphate-binding site is contributed by N234 to T235.

The protein belongs to the class-V pyridoxal-phosphate-dependent aminotransferase family. SerC subfamily. In terms of assembly, homodimer. It depends on pyridoxal 5'-phosphate as a cofactor.

It is found in the cytoplasm. The catalysed reaction is O-phospho-L-serine + 2-oxoglutarate = 3-phosphooxypyruvate + L-glutamate. It catalyses the reaction 4-(phosphooxy)-L-threonine + 2-oxoglutarate = (R)-3-hydroxy-2-oxo-4-phosphooxybutanoate + L-glutamate. It functions in the pathway amino-acid biosynthesis; L-serine biosynthesis; L-serine from 3-phospho-D-glycerate: step 2/3. Its pathway is cofactor biosynthesis; pyridoxine 5'-phosphate biosynthesis; pyridoxine 5'-phosphate from D-erythrose 4-phosphate: step 3/5. Catalyzes the reversible conversion of 3-phosphohydroxypyruvate to phosphoserine and of 3-hydroxy-2-oxo-4-phosphonooxybutanoate to phosphohydroxythreonine. The sequence is that of Phosphoserine aminotransferase from Flavobacterium psychrophilum (strain ATCC 49511 / DSM 21280 / CIP 103535 / JIP02/86).